A 493-amino-acid polypeptide reads, in one-letter code: FAD-linked oxidoreductase tazL (493 aa).

Residues 1–17 (MRSNTVILAALPLVASA) form the signal peptide. N-linked (GlcNAc...) asparagine glycosylation is found at asparagine 29, asparagine 41, asparagine 53, asparagine 91, asparagine 253, asparagine 318, and asparagine 387. One can recognise an FAD-binding PCMH-type domain in the interval 63–235 (WAEPTFAVTI…TSATYEIFDA (173 aa)).

It belongs to the oxygen-dependent FAD-linked oxidoreductase family.

Its pathway is secondary metabolite biosynthesis. FAD-linked oxidoreductase; part of the gene cluster that mediates the biosynthesis of azaterrilone A and other azaphilones, a class of fungal metabolites characterized by a highly oxygenated pyrano-quinone bicyclic core and exhibiting a broad range of bioactivities. The first step of the pathway begins with the non-reducing polyketide synthase tazA that assembles one acetyl-CoA starter unit, five malonyl-CoA units, and catalyzes a series of Claisen condensations, methylation, PT-mediated cyclization, and finally releases the first hexaketide precursor through the R-domain. The tazA product then undergoes reduction on its terminal ketone and the following pyran-ring formation by yet undetermined enzyme(s). Dehydration and enoyl reduction, possibly involving the trans-enoyl reductase tazE leads to the next intermediate. TazD is predicted as an acetyltransferase and might catalyze the acetylation steps leading to the synthesis of azaterrilone A. Azaterrilone A is not the final product of the taz pathway and both the highly reducing polyketide synthase tazB and the dual enzyme tazHJ catalyze late steps of the pathway, leading to the production of the 2 final stereoisomers that contain additional polyketide modification whose structures have still to be determined. The sequence is that of FAD-linked oxidoreductase tazL from Aspergillus terreus (strain NIH 2624 / FGSC A1156).